Reading from the N-terminus, the 143-residue chain is Small ribosomal subunit protein eS6 (143 aa).

This sequence belongs to the eukaryotic ribosomal protein eS6 family.

The chain is Small ribosomal subunit protein eS6 from Methanoregula boonei (strain DSM 21154 / JCM 14090 / 6A8).